We begin with the raw amino-acid sequence, 527 residues long: Nucleus accumbens-associated protein 1 (527 aa).

The region spanning 30–94 (CDVSVVVKGH…CYTGRLSMNV (65 aa)) is the BTB domain. The tract at residues 131 to 153 (QGLHAEEAPSSEPQSPVAQTSGW) is disordered. Residues 141–152 (SEPQSPVAQTSG) are compositionally biased toward polar residues. Residue Lys-167 forms a Glycyl lysine isopeptide (Lys-Gly) (interchain with G-Cter in SUMO1); alternate linkage. Lys-167 is covalently cross-linked (Glycyl lysine isopeptide (Lys-Gly) (interchain with G-Cter in SUMO2); alternate). Residue Lys-183 forms a Glycyl lysine isopeptide (Lys-Gly) (interchain with G-Cter in SUMO2) linkage. The residue at position 188 (Ser-188) is a Phosphoserine. The disordered stretch occupies residues 210 to 292 (DLAANRPHQP…DEEEDGGEEG (83 aa)). Over residues 225 to 251 (APVVAAAQPAVAAGAGQPAGGVAAAGG) the composition is skewed to low complexity. Polar residues predominate over residues 255–277 (GPSTSERTSPGTSSAYTSDSPGS). At Ser-259 the chain carries Phosphoserine; by PKC. Residues 281–292 (EEDEEEDGGEEG) are compositionally biased toward acidic residues. Residues Lys-318, Lys-452, Lys-480, Lys-483, and Lys-498 each participate in a glycyl lysine isopeptide (Lys-Gly) (interchain with G-Cter in SUMO2) cross-link. Residues 374–471 (GTNVYITRAQ…DMCTNARRVV (98 aa)) enclose the BEN domain.

Homooligomer; mediated by the BTB domain. Interacts with HDAC3 and HDAC4. Interacts (via BTB domain) with CUL3, PSMD7 and RCOR1. As to expression, overexpressed in several types of carcinomas including ovarian serous carcinomas. Expression levels positively correlate with tumor recurrence in ovarian serous carcinomas, and intense immunoreactivity in primary ovarian tumors predicts early recurrence. Up-regulated in ovarian carcinomas after chemotherapy, suggesting a role in development of chemotherapy resistance in ovarian cancer.

The protein localises to the nucleus. It is found in the cytoplasm. Functionally, functions as a transcriptional repressor. Seems to function as a transcriptional corepressor in neuronal cells through recruitment of HDAC3 and HDAC4. Contributes to tumor progression, and tumor cell proliferation and survival. This may be mediated at least in part through repressing transcriptional activity of GADD45GIP1. Required for recruiting the proteasome from the nucleus to the cytoplasm and dendritic spines. The chain is Nucleus accumbens-associated protein 1 (NACC1) from Homo sapiens (Human).